Reading from the N-terminus, the 80-residue chain is Large ribosomal subunit protein bL31B (80 aa).

This sequence belongs to the bacterial ribosomal protein bL31 family. Type B subfamily. As to quaternary structure, part of the 50S ribosomal subunit.

The polypeptide is Large ribosomal subunit protein bL31B (Xylella fastidiosa (strain 9a5c)).